Consider the following 269-residue polypeptide: Cyclic AMP-dependent transcription factor ATF-1 (269 aa).

The segment at 1–90 is disordered; sequence MEDSHKSNTT…GEGENPSISA (90 aa). Polar residues predominate over residues 9–18; that stretch reads TTETASQPGS. The 60-residue stretch at 31 to 90 folds into the KID domain; sequence QVSSLSESEESQDSSDSIGSSQKAHGILARRPSYRKILKDLSSEDTRGRKGEGENPSISA. S63 is subject to Phosphoserine; by CaMK1, CDK3, RPS6KA4 and RPS6KA5. Positions 67-83 are enriched in basic and acidic residues; it reads ILKDLSSEDTRGRKGEG. S196 is subject to Phosphoserine; by HIPK2. A Glycyl lysine isopeptide (Lys-Gly) (interchain with G-Cter in SUMO2) cross-link involves residue K206. In terms of domain architecture, bZIP spans 211–269; it reads QLRREIRLMKNREAARECRRKKKEYVKCLENRVAVLENQNKTLIEELKTLKDLYSHKSV. The basic motif stretch occupies residues 213 to 237; the sequence is RREIRLMKNREAARECRRKKKEYVK. The segment at 239 to 260 is leucine-zipper; sequence LENRVAVLENQNKTLIEELKTL.

This sequence belongs to the bZIP family. ATF subfamily. In terms of assembly, binds DNA as a dimer. Interacts with HIPK2 and CDK3. Interacts with MOTS-c, a peptide produced by the mitochondrially encoded 12S rRNA MT-RNR1; the interaction occurs in the nucleus following metabolic stress. Phosphorylated at Ser-196 by HIPK2 in response to genotoxic stress. This phosphorylation promotes transcription repression of FTH1 and other antioxidant detoxification genes. The CDK3-mediated phosphorylation at Ser-63 promotes its transactivation and transcriptional activities. Phosphorylated at Ser-63 by RPS6KA4 and RPS6KA5 in response to mitogenic or stress stimuli.

The protein resides in the nucleus. Functionally, binds the cAMP response element (CRE) (consensus: 5'-GTGACGT[AC][AG]-3'), a sequence present in many viral and cellular promoters. Binds to the Tax-responsive element (TRE) of HTLV-I. Mediates PKA-induced stimulation of CRE-reporter genes. Represses the expression of FTH1 and other antioxidant detoxification genes. Triggers cell proliferation and transformation. This chain is Cyclic AMP-dependent transcription factor ATF-1 (Atf1), found in Mus musculus (Mouse).